Consider the following 1062-residue polypeptide: Carbamoyl phosphate synthase large chain (1062 aa).

Residues 1–401 (MPKRTDIHKI…AMQKAVQSLE (401 aa)) form a carboxyphosphate synthetic domain region. ATP-binding residues include Arg-129, Arg-169, Gly-175, Gly-176, Lys-208, Ile-210, Glu-215, Gly-241, Ile-242, His-243, Gln-284, and Glu-298. In terms of domain architecture, ATP-grasp 1 spans 133 to 327 (KELCQKLGEP…IAKMAAKIAI (195 aa)). The Mg(2+) site is built by Gln-284, Glu-298, and Asn-300. Mn(2+)-binding residues include Gln-284, Glu-298, and Asn-300. The tract at residues 402-546 (IDEKDLYSAK…YSTYDGENES (145 aa)) is oligomerization domain. A carbamoyl phosphate synthetic domain region spans residues 547-929 (RKSGKKSVIV…ALYKAFAGAK (383 aa)). Residues 671–861 (DQIIKSLHLH…MAQVATRVIM (191 aa)) form the ATP-grasp 2 domain. ATP-binding residues include Arg-707, Asp-746, Leu-748, Glu-752, Gly-777, Val-778, His-779, Ser-780, Gln-820, and Glu-832. Mg(2+) is bound by residues Gln-820, Glu-832, and Asn-834. Residues Gln-820, Glu-832, and Asn-834 each contribute to the Mn(2+) site. One can recognise an MGS-like domain in the interval 930–1062 (MQLPENGNVL…NRSFATDALK (133 aa)). An allosteric domain region spans residues 930–1062 (MQLPENGNVL…NRSFATDALK (133 aa)).

It belongs to the CarB family. Composed of two chains; the small (or glutamine) chain promotes the hydrolysis of glutamine to ammonia, which is used by the large (or ammonia) chain to synthesize carbamoyl phosphate. Tetramer of heterodimers (alpha,beta)4. Requires Mg(2+) as cofactor. The cofactor is Mn(2+).

It carries out the reaction hydrogencarbonate + L-glutamine + 2 ATP + H2O = carbamoyl phosphate + L-glutamate + 2 ADP + phosphate + 2 H(+). The catalysed reaction is hydrogencarbonate + NH4(+) + 2 ATP = carbamoyl phosphate + 2 ADP + phosphate + 2 H(+). It functions in the pathway amino-acid biosynthesis; L-arginine biosynthesis; carbamoyl phosphate from bicarbonate: step 1/1. Its pathway is pyrimidine metabolism; UMP biosynthesis via de novo pathway; (S)-dihydroorotate from bicarbonate: step 1/3. In terms of biological role, large subunit of the glutamine-dependent carbamoyl phosphate synthetase (CPSase). CPSase catalyzes the formation of carbamoyl phosphate from the ammonia moiety of glutamine, carbonate, and phosphate donated by ATP, constituting the first step of 2 biosynthetic pathways, one leading to arginine and/or urea and the other to pyrimidine nucleotides. The large subunit (synthetase) binds the substrates ammonia (free or transferred from glutamine from the small subunit), hydrogencarbonate and ATP and carries out an ATP-coupled ligase reaction, activating hydrogencarbonate by forming carboxy phosphate which reacts with ammonia to form carbamoyl phosphate. The protein is Carbamoyl phosphate synthase large chain of Lactobacillus helveticus (strain DPC 4571).